A 679-amino-acid chain; its full sequence is Protein hook (679 aa).

Positions 6 to 123 constitute a Calponin-homology (CH) domain; that stretch reads NEMYYSLLEW…RLLQLVLGCA (118 aa). Coiled-coil stretches lie at residues 135-437 and 480-574; these read EIMC…LKCG and QTAL…QEIL.

Belongs to the hook family. In terms of assembly, homodimer. Interacts with microtubules via its N-terminus.

The protein resides in the cytoplasm. It localises to the cytoskeleton. Its subcellular location is the endosome. It is found in the synapse. Its function is as follows. Involved in endocytic trafficking by stabilizing organelles of the endocytic pathway. Probably acts as a cytoskeletal linker protein required to tether endosome vesicles to the cytoskeleton. Involved in modulation of endocytosis at stages required for down-regulation of membrane proteins that control synapse size. Not involved in synaptic vesicle recycling. Required in R7 cells for boss endocytosis into multivesicular bodies (MVBs). Has a role in regulating adult longevity. The sequence is that of Protein hook from Drosophila simulans (Fruit fly).